Reading from the N-terminus, the 1035-residue chain is Teashirt homolog 2 (1035 aa).

The tract at residues 1-92 is disordered; sequence MPRRKQQAPK…ESLLSDASDQ (92 aa). Residues 13 to 42 adopt a coiled-coil conformation; the sequence is AGYAQEEQLKEEEEIKEEEEEEEDSGSVAQ. The segment covering 21–37 has biased composition (acidic residues); that stretch reads LKEEEEIKEEEEEEEDS. Polar residues-rich tracts occupy residues 39–49 and 66–92; these read SVAQLQGSNDP and SYQNSPGSHLSNQDAENESLLSDASDQ. Residue Lys-189 forms a Glycyl lysine isopeptide (Lys-Gly) (interchain with G-Cter in SUMO2) linkage. C2H2-type zinc fingers lie at residues 216 to 240 and 276 to 300; these read FRCRQCSAAYDTLVELTVHMNETGH and LKCMFCGDSFDSLQDLSVHMIKTKH. The segment at 240-266 is disordered; sequence HYQDDNRKKDKLRPTSYSKPRKRAFQD. Residues Lys-307 and Lys-316 each participate in a glycyl lysine isopeptide (Lys-Gly) (interchain with G-Cter in SUMO2) cross-link. The segment at 381-405 adopts a C2H2-type 3; atypical zinc-finger fold; that stretch reads LKCMECGSSHDTLQQLTTHMMVTGH. Residue Lys-418 forms a Glycyl lysine isopeptide (Lys-Gly) (interchain with G-Cter in SUMO2) linkage. Positions 432-450 are enriched in low complexity; the sequence is SLSDAPSSDSLAPKPSSNS. Residues 432–496 are disordered; that stretch reads SLSDAPSSDS…DPLQKPLDPA (65 aa). Over residues 460 to 483 the composition is skewed to basic and acidic residues; sequence ELKRESKKEKPEELRTDEKVLKSE. Residues Lys-462, Lys-481, Lys-498, and Lys-602 each participate in a glycyl lysine isopeptide (Lys-Gly) (interchain with G-Cter in SUMO2) cross-link. Disordered stretches follow at residues 600 to 674 and 764 to 791; these read QVKK…VEPV and QPIDLTKSKSKKAESSQAQSCTSPPQKH. Over residues 601-669 the composition is skewed to basic and acidic residues; the sequence is VKKEPEDKEE…KDGGEKEKAQ (69 aa). Glycyl lysine isopeptide (Lys-Gly) (interchain with G-Cter in SUMO2) cross-links involve residues Lys-801 and Lys-821. The homeobox DNA-binding region spans 842–912; the sequence is RKGRQSNWNP…NVKYQLRKTG (71 aa). Residues 927–949 form a C2H2-type 4 zinc finger; that stretch reads FYCSDCASQFRTPSTYISHLESH. Residues 968–977 show a composition bias toward low complexity; sequence VEQEISRVSS. Disordered regions lie at residues 968 to 987 and 1015 to 1035; these read VEQEISRVSSAQRSPETIAG and SKTHSKSPEHHAQFVTDVDEE. Phosphoserine is present on Ser-981. The C2H2-type 5 zinc finger occupies 995–1018; sequence FKCKLCCRTFVSKHAVKLHLSKTH.

The protein belongs to the teashirt C2H2-type zinc-finger protein family. Interacts (via homeobox domain) with APBB1 (via PID domain 1). Post-translationally, sumoylated.

It is found in the nucleus. In terms of biological role, probable transcriptional regulator involved in developmental processes. May act as a transcriptional repressor (Potential). This is Teashirt homolog 2 (TSHZ2) from Sus scrofa (Pig).